The chain runs to 448 residues: MNDDDFGFSGIIKIANVSDFIAPSQACILPLQSKESDVEVQIRVRSRAKKVDDSAVKKVEVTLKDCLACSGCITSAETILIKEQSKPKFLEGLKKAQLSVMTVSPQSIASIAYKRGCHLSEAARLIARIFMNMGMKYVVDSSFGRLLTLSLSYDEFKESQLQRPIFTGVCPGFVCYAEKTHGTLLIPHISCVRSPQAMMGALVKDYLARKFNVRPEEIFHASVMPCFDKKLEAARSHSENHFNCREVDCVLSTGEVDAILDECSSTESFPVDGKVGWLNALENGKIISSEGGSSGGYAEYIVKRFVEESKTPLKLKRTIKDKNWEIIEAVDGETIVLSVAKCYGFRNIQNQVQKLKRSKCNYDYVEIMACPSGCINGGGQIRSASIEERKQLLDTIELPCSEDNSEMEEQLERVKEEWSILNPDWMNLLYTKYHAVVKSDADRISTNW.

The [4Fe-4S] cluster site is built by C27, C66, C69, C72, C170, C226, C370, and C374.

This sequence belongs to the NARF family.

In terms of biological role, component of the cytosolic iron-sulfur (Fe/S) protein assembly machinery. Required for maturation of extramitochondrial Fe/S proteins. This is Probable cytosolic Fe-S cluster assembly factor Bm6838 from Brugia malayi (Filarial nematode worm).